The chain runs to 656 residues: Acyl-CoA-binding domain-containing protein 6 (656 aa).

The ACB domain maps to 8-102 (YPDRFYAAAA…LEEEDPGWYS (95 aa)). An acyl-CoA is bound by residues 44-48 (YGLYQ) and Lys-70. The segment at 129 to 148 (ASTNGTSVPEPKTISENGSS) is disordered. Kelch repeat units follow at residues 194–241 (KMYI…AQVS), 254–304 (KFFS…LVGT), 305–354 (TLVL…CHAD), 356–405 (YLLI…TVGE), 406–454 (NWYI…LVHS), and 461–507 (YLIS…EPEV). The stretch at 527–636 (LKKDDANELL…EQAALEAKQR (110 aa)) forms a coiled coil. The interval 627–656 (EQAALEAKQRQSSSGMWGWLVGTPPDKSES) is disordered.

This sequence belongs to the ACBP family. As to expression, highly expressed in leaves. Expressed in roots and seeds.

The protein localises to the peroxisome. Functionally, binds medium- and long-chain acyl-CoA esters with high affinity. Can interact in vitro with linoleoyl-CoA and linolenoyl-CoA. Binds phosphatidic acid (PA) and phosphatidylcholine (PC) in vitro. May play a role in the biosynthesis of phospholipids. May be involved in lipid degradation via peroxisomal beta-oxydation. This is Acyl-CoA-binding domain-containing protein 6 from Oryza sativa subsp. japonica (Rice).